The sequence spans 179 residues: MAIEILRLGHRGERDKRISTHVALTSRALGAEKIIFTEEDKHVKESVERIVDSWGGDFKFEVVKSWRTYAKRFKDNGIVVHLTMYGENINKIMTEIREDISKTNKNLLLIIGAEKVPREAYDLANYNLSVGNQPHSEVAALAIFLDRLTEGKTLYSEYDNAKIKVTPSKSEKCVFVEKD.

S-adenosyl-L-methionine-binding positions include Leu-82, 112-116, and 130-137; these read GAEKV and VGNQPHSE.

It belongs to the aTrm56 family. In terms of assembly, homodimer.

The protein resides in the cytoplasm. The enzyme catalyses cytidine(56) in tRNA + S-adenosyl-L-methionine = 2'-O-methylcytidine(56) in tRNA + S-adenosyl-L-homocysteine + H(+). Specifically catalyzes the AdoMet-dependent 2'-O-ribose methylation of cytidine at position 56 in tRNAs. The chain is tRNA (cytidine(56)-2'-O)-methyltransferase from Methanococcus maripaludis (strain C5 / ATCC BAA-1333).